Reading from the N-terminus, the 504-residue chain is DnaJ homolog subfamily C member 3 (504 aa).

The signal sequence occupies residues 1–31 (MVAPGSVGSRLGAVFPFLLVLVDLQYEGAEC). TPR repeat units follow at residues 37–70 (VEKH…DPDN), 72–104 (IAYY…KMDF), 105–138 (TAAR…NPSE), 154–187 (MQRL…CVWD), 188–221 (AELR…KSDN), 222–255 (TEAF…DQDH), 268–301 (LNKL…EPSV), 306–339 (VRSK…EPDN), and 340–373 (VNAL…NEND). Cysteines 248 and 258 form a disulfide. Serine 274 is modified (phosphoserine). Cysteine 313 and cysteine 329 are joined by a disulfide. Residues 375–393 (QIREGLEKAQRLLKQSQKR) form a flexible linker region. Positions 394–462 (DYYKILGVKR…EMRKKFDDGE (69 aa)) constitute a J domain. The segment at 451 to 481 (DPEMRKKFDDGEDPLDAESQQGGGGNPFHRS) is disordered.

In terms of assembly, interacts with EIF2AK4/GCN2; this interaction occurs under endoplasmic reticulum (ER) stress, hypothermic and amino acid starving stress conditions and inhibits EIF2AK4/GCN2 kinase activity. Interacts with EIF2AK3. Interacts with EIF2AK2. Forms a trimeric complex with DNAJB1 and HSPA8. Interacts with THAP12. As to expression, widely expressed, with high level in the liver.

The protein resides in the endoplasmic reticulum. Functionally, involved in the unfolded protein response (UPR) during endoplasmic reticulum (ER) stress. Acts as a negative regulator of the EIF2AK4/GCN2 kinase activity by preventing the phosphorylation of eIF-2-alpha at 'Ser-52' and hence attenuating general protein synthesis under ER stress, hypothermic and amino acid starving stress conditions. Co-chaperone of HSPA8/HSC70, it stimulates its ATPase activity. May inhibit both the autophosphorylation of EIF2AK2/PKR and the ability of EIF2AK2 to catalyze phosphorylation of the EIF2A. May inhibit EIF2AK3/PERK activity. This is DnaJ homolog subfamily C member 3 (Dnajc3) from Mus musculus (Mouse).